A 55-amino-acid chain; its full sequence is Large ribosomal subunit protein bL33 (55 aa).

Belongs to the bacterial ribosomal protein bL33 family.

The chain is Large ribosomal subunit protein bL33 from Rhizobium etli (strain CIAT 652).